Here is a 429-residue protein sequence, read N- to C-terminus: SET domain-containing protein 8 (429 aa).

Residues 17-232 (KQITIKKIRK…ENEEVTINYG (216 aa)) enclose the SET domain.

The protein belongs to the class V-like SAM-binding methyltransferase superfamily.

It is found in the cytoplasm. It localises to the nucleus. This chain is SET domain-containing protein 8 (set8), found in Schizosaccharomyces pombe (strain 972 / ATCC 24843) (Fission yeast).